The primary structure comprises 1072 residues: Carbamoyl phosphate synthase large chain (1072 aa).

The interval 1–401 (MPKRLDINTI…SLLKAVRSLE (401 aa)) is carboxyphosphate synthetic domain. 12 residues coordinate ATP: R129, R169, G175, G176, K208, I210, E215, G241, V242, H243, Q284, and E298. The 195-residue stretch at 133–327 (RTLMQELNEP…IAKLAAKIAV (195 aa)) folds into the ATP-grasp 1 domain. Mg(2+) contacts are provided by Q284, E298, and N300. The Mn(2+) site is built by Q284, E298, and N300. The tract at residues 402 to 546 (LGIYHLELDH…YSTYADENES (145 aa)) is oligomerization domain. Residues 547–929 (IVTDRKSVVV…ALYKGLVASG (383 aa)) are carbamoyl phosphate synthetic domain. One can recognise an ATP-grasp 2 domain in the interval 671-861 (EAALTKLGIP…MANVATKVIL (191 aa)). Residues R707, R746, E752, G777, V778, H779, S780, Q820, and E832 each contribute to the ATP site. The Mg(2+) site is built by Q820, E832, and N834. Residues Q820, E832, and N834 each coordinate Mn(2+). An MGS-like domain is found at 930 to 1072 (INIPTHGSVI…QTKRHEVVHA (143 aa)). The allosteric domain stretch occupies residues 930 to 1072 (INIPTHGSVI…QTKRHEVVHA (143 aa)).

It belongs to the CarB family. In terms of assembly, composed of two chains; the small (or glutamine) chain promotes the hydrolysis of glutamine to ammonia, which is used by the large (or ammonia) chain to synthesize carbamoyl phosphate. Tetramer of heterodimers (alpha,beta)4. Requires Mg(2+) as cofactor. It depends on Mn(2+) as a cofactor.

It catalyses the reaction hydrogencarbonate + L-glutamine + 2 ATP + H2O = carbamoyl phosphate + L-glutamate + 2 ADP + phosphate + 2 H(+). It carries out the reaction hydrogencarbonate + NH4(+) + 2 ATP = carbamoyl phosphate + 2 ADP + phosphate + 2 H(+). It functions in the pathway amino-acid biosynthesis; L-arginine biosynthesis; carbamoyl phosphate from bicarbonate: step 1/1. The protein operates within pyrimidine metabolism; UMP biosynthesis via de novo pathway; (S)-dihydroorotate from bicarbonate: step 1/3. Large subunit of the glutamine-dependent carbamoyl phosphate synthetase (CPSase). CPSase catalyzes the formation of carbamoyl phosphate from the ammonia moiety of glutamine, carbonate, and phosphate donated by ATP, constituting the first step of 2 biosynthetic pathways, one leading to arginine and/or urea and the other to pyrimidine nucleotides. The large subunit (synthetase) binds the substrates ammonia (free or transferred from glutamine from the small subunit), hydrogencarbonate and ATP and carries out an ATP-coupled ligase reaction, activating hydrogencarbonate by forming carboxy phosphate which reacts with ammonia to form carbamoyl phosphate. This Bacillus thuringiensis (strain Al Hakam) protein is Carbamoyl phosphate synthase large chain.